Consider the following 379-residue polypeptide: Alcohol dehydrogenase 2 (379 aa).

8 residues coordinate Zn(2+): Cys-47, Thr-49, His-69, Cys-99, Cys-102, Cys-105, Cys-113, and Cys-177. An alcohol is bound by residues Thr-49 and His-69. Thr-49 contributes to the NAD(+) binding site. NAD(+) contacts are provided by residues 202-207 (GLGAVG), Asp-226, Lys-231, Thr-272, Val-295, 295-297 (VGV), Phe-322, and Arg-372.

It belongs to the zinc-containing alcohol dehydrogenase family. Homodimer. It depends on Zn(2+) as a cofactor.

It is found in the cytoplasm. The enzyme catalyses a primary alcohol + NAD(+) = an aldehyde + NADH + H(+). It carries out the reaction a secondary alcohol + NAD(+) = a ketone + NADH + H(+). The polypeptide is Alcohol dehydrogenase 2 (ADH2) (Oryza sativa subsp. indica (Rice)).